The primary structure comprises 449 residues: MPNLEELWAYLNDKFREELTPVGYSTWIQTAKPVKLTKDKLEIEVPASLHKAYWEKNLVTKVVEGVYEFAQLEVDPVIMTKDELQPAPATDQRPAVEEDDQNLTFKAKTHLNPKYTFDRFVIGKGNQMAHAAALAVAEAPGTTYNPLFIYGGVGLGKTHLMQAIGNLVLDNNPAANIKYVTSENFANDFINSIQTKQQEQFRQEYRNVDLLLVDDIQFFGDKEATQEEFFHTFNTLYENMKQIVLTSDRLPNEIPKLQERLVSRFNKGLSVDVTPPDLETRIAILRNKADAEDLSIPDDTLSYIAGQIESNVRDLEGALVRVQAFSTMKNEDITTSLAADALKALKLDDRSGQLTIPQILNAVAKYFQLTVQDLKGKKRVKQIVIPRQIAMYLAREMTDNSLPKIGQEIGGKDHTTVIHAHEKIMASMTTDENLKAQVIELRNILKNRG.

The tract at residues 1-72 is domain I, interacts with DnaA modulators; it reads MPNLEELWAY…VEGVYEFAQL (72 aa). A domain II region spans residues 72 to 109; that stretch reads LEVDPVIMTKDELQPAPATDQRPAVEEDDQNLTFKAKT. The tract at residues 110-326 is domain III, AAA+ region; sequence HLNPKYTFDR…GALVRVQAFS (217 aa). The ATP site is built by glycine 154, glycine 156, lysine 157, and threonine 158. The tract at residues 327–449 is domain IV, binds dsDNA; that stretch reads TMKNEDITTS…ELRNILKNRG (123 aa).

This sequence belongs to the DnaA family. As to quaternary structure, oligomerizes as a right-handed, spiral filament on DNA at oriC.

The protein resides in the cytoplasm. Plays an essential role in the initiation and regulation of chromosomal replication. ATP-DnaA binds to the origin of replication (oriC) to initiate formation of the DNA replication initiation complex once per cell cycle. Binds the DnaA box (a 9 base pair repeat at the origin) and separates the double-stranded (ds)DNA. Forms a right-handed helical filament on oriC DNA; dsDNA binds to the exterior of the filament while single-stranded (ss)DNA is stabiized in the filament's interior. The ATP-DnaA-oriC complex binds and stabilizes one strand of the AT-rich DNA unwinding element (DUE), permitting loading of DNA polymerase. After initiation quickly degrades to an ADP-DnaA complex that is not apt for DNA replication. Binds acidic phospholipids. The protein is Chromosomal replication initiator protein DnaA of Lacticaseibacillus casei (strain BL23) (Lactobacillus casei).